The primary structure comprises 378 residues: Serpin B6 (378 aa).

An N-acetylmethionine modification is found at Met-1. Lys-196 carries the post-translational modification N6-acetyllysine.

The protein belongs to the serpin family. Ov-serpin subfamily. Forms a complex with the monomeric form of beta-tryptase. Brain.

Its subcellular location is the cytoplasm. Its function is as follows. Inhibitor of cathepsin G, kallikrein-8 and thrombin. May play an important role in the inner ear in the protection against leakage of lysosomal content during stress. May be involved in the regulation of serine proteinases present in the brain or extravasated from the blood. The protein is Serpin B6 (SERPINB6) of Bos taurus (Bovine).